A 320-amino-acid polypeptide reads, in one-letter code: Homeobox-leucine zipper protein HOX25 (320 aa).

Residues 79 to 139 constitute a DNA-binding region (homeobox); the sequence is AAARKRRLTA…NRRARWKTKQ (61 aa). The leucine-zipper stretch occupies residues 138-182; sequence KQLELDFDRLRAAHDELLAGRTALAADNESLRSQVILLTEKLQAN. Disordered regions lie at residues 181-209 and 249-282; these read ANGK…KSFQ and DSPE…PSSS. Over residues 265–278 the composition is skewed to acidic residues; that stretch reads SEDDCGGAGSDDDY.

This sequence belongs to the HD-ZIP homeobox family. Class I subfamily. In terms of tissue distribution, expressed in roots, leaf sheaths and blades and panicles.

The protein resides in the nucleus. Probable transcription factor. This is Homeobox-leucine zipper protein HOX25 (HOX25) from Oryza sativa subsp. japonica (Rice).